Reading from the N-terminus, the 1711-residue chain is MQPQSDKQSASRLATTTSHSTAAASATAATPPKVKVIKSKRPLCHFKFYLDICDHQLAKRIESDIKALGGHLEFFLSDDITHFVTDKPEVIGGTSGTPGTPSTPGTPTSHYQQNDGSARKPNQRQSRADAILSRVRRSTVGVVNSGNSTPTTSLKRSYTIWQTDYAQRFIKRIQTELKQYLEGKKEGGGGSTSASPHHIQLKKQYVKIESVKRNYRPYYHLIKQPDDWPKIDLSSEDGAFRLLTKSKTKDKEHSMTRKPLGSRTSQKDKQAAGEAKPLQHPSLQELKKQSAIPNSPRSNCREPIDSSEKQGGVCEICKLEYDILNIHLQSKDHELFAKNSDNFLALDTLIQSSADVNRFLEEEPVESELDMDVDESLSNEELQSPRQRPSPALREKSKRITKGKHSSEKFQGVAVASPQTPFPGAKKVQGNSPGSLSELQRQEHPTTAAATPTTNSGRRKTQNSGLSPPKRAMLPPSSIYKVVETREECATPPRGRGRPPNQVDSPSLIVKFQKIRQTELQRLNGEAENFMFPRTAVPTTRSSSELPTDVDRQTTSDVRGRYSISSASLDTSTSEAETKESSGLPTSIRKRAQAVGRRRKVGGAAAQDVFQRQLSTGSSSSNSNQQRFPSAPIQPEEGPQPQPKPQLKIKIKQEQLVATRKSSRTATAIVTAATASSHQQQQLRQTTCRKMANKLEDRMGELVKPKIKIKKEVIEEQKVKELEDLEEILDKELDEEVDSSCSSGSDEDYIAGSQRRITAAPRKSTDTREQRAARRLSRLTINRSAGELELTEVKTSPSKSRTKIQKPSSPTKNKVKQTKAVPPAIDLFFDCSKSERLREMQYTFESLPSGELWNRVFLRQDAGEENYYTYYGSTNYRKLPYEMGPIPMAKTLPAHSCALCREASEVKQDKGEQIKLEDQKPAPKKEVKKEEEVQSSSSSATYKNKKLHLLQRYQQEQEQLQQLEGNSLATAGAKCDSKASTPELLEREFASGSMGDRVQLIERVRSTSSSSCSNSQRSGITCRNKQLARIAELPPRKSPREHASTLALVSCIIRQRQDSQSKTNSEAEEPPPPVAAPKLKTPIKQEPVAPSSPRTTRSQAATPVEELRFATEISETVKRMRRGQNKYDHSPPAPVPTPATSSPVRSRRLTPAARNQSQIYSRRLEFATSQRESSASALLGKRKRRVNPSVAGTVRPTTQNLPGTGAYRGVRKLPSKKGLLEYEMETCALKALDQARQYCNPGFVAWQLDKYLELAGKEYDIEFDQISPEVESEGREERLVNTPQTPPPTDCFTSEFDLCDLIMGSAGSGDDDEDVSRGNPPGSGRRMSNLNLYASYYRKRKSLKSNRTGWPKAQRRRNAGGLGGSRALPDERINFQKMGLAELHPIKQEPMETEEEQTTTTTTTTTTSATRGNLLSKDDEDDEGGGNSPSGGSPADDKQNSREDAVMTPPATDVDEQAEPQADEMESLPDEDETMADSVDQQQDVEAEIEATDADVEEEEEEEDEDEDVFEDAYEEQDMGIQKTEPHEKRARIPSISVTTPPEDSSQGKKLLLTLHNGQRLQATSTPSTGQVQQHQRRTPQLNGSLGSCISPSEKLGDNSDIFTVSSDGLDTDLDLSNTQAGDSHEHCPHQTTPKRKFDISKYAPPNSGKAASSCAAEAATAAVKSLAISQFLKKETCASSSSMRNAWRRTQRRAISAACISAAPSARVPN.

Disordered regions lie at residues 1-31, 87-129, and 244-307; these read MQPQSDKQSASRLATTTSHSTAAASATAATP, KPEV…SRAD, and TKSK…IDSS. The interval 1-400 is sufficient for interaction with and activation of Cdc7; sequence MQPQSDKQSA…PALREKSKRI (400 aa). Composition is skewed to low complexity over residues 10–30 and 97–109; these read ASRLATTTSHSTAAASATAAT and TPGTPSTPGTPTS. Serine 306 and serine 307 each carry phosphoserine. A DBF4-type zinc finger spans residues 307 to 356; it reads SEKQGGVCEICKLEYDILNIHLQSKDHELFAKNSDNFLALDTLIQSSADV. Zn(2+) is bound by residues cysteine 314, cysteine 317, histidine 327, and histidine 333. Acidic residues predominate over residues 365–378; sequence VESELDMDVDESLS. 11 disordered regions span residues 365-507, 531-647, 733-771, 791-817, 908-945, 1005-1025, 1055-1157, 1271-1290, 1303-1329, 1343-1370, and 1383-1644; these read VESE…DSPS, MFPR…KPQL, LDEEVDSSCSSGSDEDYIAGSQRRITAAPRKSTDTREQR, TEVKTSPSKSRTKIQKPSSPTKNKVKQ, QDKGEQIKLEDQKPAPKKEVKKEEEVQSSSSSATYKNK, RSTSSSSCSNSQRSGITCRNK, QRQD…RNQS, ESEGREERLVNTPQTPPPTD, MGSAGSGDDDEDVSRGNPPGSGRRMSN, LKSNRTGWPKAQRRRNAGGLGGSRALPD, and LHPI…SKYA. 5 positions are modified to phosphoserine: serine 406, serine 407, serine 417, serine 432, and serine 435. Over residues 429–439 the composition is skewed to polar residues; sequence QGNSPGSLSEL. Low complexity predominate over residues 445 to 454; sequence PTTAAATPTT. Position 467 is a phosphoserine (serine 467). Positions 493-505 form a DNA-binding region, a.T hook; the sequence is PRGRGRPPNQVDS. Positions 537 to 546 are enriched in polar residues; sequence VPTTRSSSEL. Serine 542, serine 543, and serine 544 each carry phosphoserine. The segment covering 549–560 has biased composition (basic and acidic residues); the sequence is DVDRQTTSDVRG. Residues 563 to 575 are compositionally biased toward low complexity; it reads SISSASLDTSTSE. Positions 588-601 are enriched in basic residues; the sequence is IRKRAQAVGRRRKV. Polar residues predominate over residues 793 to 812; it reads VKTSPSKSRTKIQKPSSPTK. The span at 908-932 shows a compositional bias: basic and acidic residues; it reads QDKGEQIKLEDQKPAPKKEVKKEEE. Low complexity predominate over residues 1006 to 1018; that stretch reads STSSSSCSNSQRS. Threonine 1081 is subject to Phosphothreonine. Phosphoserine is present on residues serine 1091 and serine 1092. The span at 1092–1101 shows a compositional bias: polar residues; sequence SPRTTRSQAA. Over residues 1398 to 1407 the composition is skewed to low complexity; it reads TTTTTTTTTT. A sufficient for interaction with Gcn5 region spans residues 1400 to 1695; the sequence is TTTTTTTTSA…NAWRRTQRRA (296 aa). Residues 1435 to 1445 show a composition bias toward basic and acidic residues; that stretch reads ADDKQNSREDA. 2 stretches are compositionally biased toward acidic residues: residues 1453-1475 and 1483-1518; these read DVDEQAEPQADEMESLPDEDETM and QDVEAEIEATDADVEEEEEEEDEDEDVFEDAYEEQD. Composition is skewed to polar residues over residues 1536–1545 and 1556–1591; these read ISVTTPPEDS and HNGQRLQATSTPSTGQVQQHQRRTPQLNGSLGSCIS.

As to quaternary structure, component of the Dbf4-dependent kinase (DDK) complex consisting of Cdc7 and the Dbf4 ortholog chif. Interacts with Cdc7; the interaction is direct. Interacts with CG5790. In terms of assembly, component of the Chiffon histone acetyltransferase (CHAT) complex consisting of Ada3, Sgf29, Gcn5, chif/chiffon and Ada2b (Isoform A). Interacts (via C-terminus) with Gcn5; the interaction is direct but weak in the absence of other CHAT components. In terms of processing, may be proteolytically cleaved to produce a N-terminal 50 kDa product.

The protein resides in the nucleus. Functionally, a bicistronic gene producing two proteins that are components of different complexes and have separate properties and functions. Full-length protein is proteolytically cleaved, producing a ~50kDa N-terminal product (Chiffon-A) that forms part of the DDK complex; it is unclear if the C-terminal proteolytic product is stable or functional. Alternative initiation from an internal ribosome entry site produces a C-terminal ~48kDa product (Chiffon-B or Isoform E) that forms part of the CHAT complex. Involved in regulation of gene expression during embryonic development. Its function is as follows. Regulatory component of the Dbf4-dependent kinase (DDK) complex. Required for the amplification stage, but not the preceding endoreplication stage of DNA replication in egg chamber follicle cells of the ovary. May be involved in initiation of DNA replication; activation of the chorion gene origins. May have a role in eye and thoracic bristle development. Required for female fertility; is not required for oogenesis but is required maternally for early embryo development. In terms of biological role, component of the CHAT histone acetyltransferase complex, which predominantly acetylates histone H3. As part of the CHAT complex involved in acetylation of histone H3 on 'Lys-10' (H3K9ac), 'Lys-15' (H3K14ac) and 'Lys-19' (H3K18ac), but not 'Lys-25' (H3K24ac). May also regulate other histone acetyltransferase complexes. Essential for viability. Not required for early stages of embryonic development. May be involved in zygotic genome activation during embryogenesis. This chain is Protein chiffon, found in Drosophila melanogaster (Fruit fly).